Here is a 204-residue protein sequence, read N- to C-terminus: UPF0637 protein SAR1080 (204 aa).

This sequence belongs to the UPF0637 family.

The sequence is that of UPF0637 protein SAR1080 from Staphylococcus aureus (strain MRSA252).